A 447-amino-acid chain; its full sequence is N-succinylarginine dihydrolase (447 aa).

Residues 19-28, asparagine 110, and 137-138 contribute to the substrate site; these read AGLSFGNEAS and HR. Residue glutamate 174 is part of the active site. Residue arginine 212 coordinates substrate. Histidine 248 is a catalytic residue. Residues aspartate 250 and asparagine 359 each contribute to the substrate site. Cysteine 365 acts as the Nucleophile in catalysis.

The protein belongs to the succinylarginine dihydrolase family. As to quaternary structure, homodimer.

It catalyses the reaction N(2)-succinyl-L-arginine + 2 H2O + 2 H(+) = N(2)-succinyl-L-ornithine + 2 NH4(+) + CO2. It functions in the pathway amino-acid degradation; L-arginine degradation via AST pathway; L-glutamate and succinate from L-arginine: step 2/5. In terms of biological role, catalyzes the hydrolysis of N(2)-succinylarginine into N(2)-succinylornithine, ammonia and CO(2). The sequence is that of N-succinylarginine dihydrolase from Escherichia coli (strain K12 / MC4100 / BW2952).